The following is an 801-amino-acid chain: Phenylalanine--tRNA ligase beta subunit (801 aa).

In terms of domain architecture, tRNA-binding spans 39 to 147; it reads GGGLDEVVVA…TDLPLGVPVF (109 aa). In terms of domain architecture, B5 spans 401–477; sequence LPRRTVRFRV…RLNGYNNIPV (77 aa). Residues Asp455, Asp461, Glu464, and Glu465 each coordinate Mg(2+). One can recognise an FDX-ACB domain in the interval 708–801; the sequence is SRFPDTFRDI…LVKKLAVTIR (94 aa).

It belongs to the phenylalanyl-tRNA synthetase beta subunit family. Type 1 subfamily. Tetramer of two alpha and two beta subunits. Mg(2+) serves as cofactor.

It localises to the cytoplasm. It carries out the reaction tRNA(Phe) + L-phenylalanine + ATP = L-phenylalanyl-tRNA(Phe) + AMP + diphosphate + H(+). This chain is Phenylalanine--tRNA ligase beta subunit, found in Geobacter metallireducens (strain ATCC 53774 / DSM 7210 / GS-15).